A 369-amino-acid chain; its full sequence is uncharacterized protein (369 aa).

Disordered stretches follow at residues 1 to 42, 60 to 107, 146 to 177, and 214 to 369; these read MRAA…NNNS, PSDL…KEDD, ALSM…NSSG, and LSSH…GDDD. Residues 12-24 are compositionally biased toward polar residues; the sequence is VGPNNNNQSNTIN. Composition is skewed to low complexity over residues 30–42 and 70–86; these read SNSN…NNNS and YHSN…NSSS. Positions 87 to 101 are enriched in polar residues; it reads AITSGTVAPSSSMNN. Residues 155–169 are compositionally biased toward acidic residues; that stretch reads DSESDISEKEDDNDG. Residues 219–324 are compositionally biased toward low complexity; the sequence is NNNNNSSNNN…NNNNNNSNIY (106 aa).

This is an uncharacterized protein from Dictyostelium discoideum (Social amoeba).